Reading from the N-terminus, the 200-residue chain is Imidazoleglycerol-phosphate dehydratase (200 aa).

Belongs to the imidazoleglycerol-phosphate dehydratase family.

It localises to the cytoplasm. It catalyses the reaction D-erythro-1-(imidazol-4-yl)glycerol 3-phosphate = 3-(imidazol-4-yl)-2-oxopropyl phosphate + H2O. It functions in the pathway amino-acid biosynthesis; L-histidine biosynthesis; L-histidine from 5-phospho-alpha-D-ribose 1-diphosphate: step 6/9. The protein is Imidazoleglycerol-phosphate dehydratase of Chlorobium luteolum (strain DSM 273 / BCRC 81028 / 2530) (Pelodictyon luteolum).